Here is a 78-residue protein sequence, read N- to C-terminus: Conotoxin ba1890.8 (78 aa).

A signal peptide spans 1–22; that stretch reads MKTSGRLLFLCLAVGLLLESQA. Residues 23-61 constitute a propeptide that is removed on maturation; sequence HPIADAEDATRNVGSDGTSVELSEILERGQDSSAEKGQR. The tract at residues 25–78 is disordered; it reads IADAEDATRNVGSDGTSVELSEILERGQDSSAEKGQRQNDHDVDESGHDIPFPS. Residues 34 to 43 are compositionally biased toward polar residues; that stretch reads NVGSDGTSVE. The span at 47–72 shows a compositional bias: basic and acidic residues; the sequence is ILERGQDSSAEKGQRQNDHDVDESGH. Q62 is subject to Pyrrolidone carboxylic acid.

This sequence belongs to the conotoxin H superfamily. Expressed by the venom duct.

The protein localises to the secreted. Functionally, probable toxin. The polypeptide is Conotoxin ba1890.8 (Conus bayani (Bayan's cone)).